Reading from the N-terminus, the 938-residue chain is Myocardin (938 aa).

An MEF2C-binding motif is present at residues 12-27 (IRRKFRSVLQLRLQQR). RPEL repeat units follow at residues 18-43 (SVLQLRLQQRRTQEQLANQGLIPPLK), 62-87 (DSLRRKVRNRSDRASLVNMHILQAST), and 106-131 (DDLNEKIALRPGPLELVEKNILPMDS). A disordered region spans residues 37–64 (GLIPPLKSPTEFHDPRKKLDSAKTEDSL). The span at 46–64 (TEFHDPRKKLDSAKTEDSL) shows a compositional bias: basic and acidic residues. Residues 153 to 205 (FEDDSSRDGLSPDQARSEDPQGSGGSTPDIKSTEAPLAGPLDTIQDLTPGSES) are HDAC5-binding. Disordered stretches follow at residues 155–282 (DDSS…PPPM) and 339–381 (NEQM…PLPP). Residues 210–221 (TASQLSNQSDSG) show a composition bias toward polar residues. A compositionally biased stretch (basic residues) spans 248 to 265 (NRHKKPKDPKPKVKKLKY). The span at 345 to 360 (NPNSSSTPLNNTPLSP) shows a compositional bias: low complexity. Polar residues predominate over residues 361 to 372 (VKNSLSGQTGVS). Positions 383–417 (LDDLKVSELRQQLRIRGLPVSGTKTALVDRLRPFQ) constitute an SAP domain. S457, S461, S465, and S469 each carry phosphoserine; by GSK3-beta. The segment at 501–521 (ESLLSSLNGGSGPSEPDGLDS) is disordered. A coiled-coil region spans residues 522-566 (EKDKMLVEKQKVINQLTWKLRQEQRQVEELRMQLQKQKSGCNDQK). The interval 586-606 (AAQQASGKGQGHSSDSPPPAC) is disordered. A compositionally biased stretch (polar residues) spans 588–600 (QQASGKGQGHSSD). Residues S627, S631, S635, and S639 each carry the phosphoserine; by GSK3-beta modification. 2 stretches are compositionally biased toward polar residues: residues 667–694 (GAQRENHGVSSPNSSQGCAQMTGLQSSD) and 701–713 (SIPSPTFPKSSPT). The disordered stretch occupies residues 667–734 (GAQRENHGVS…DAVKQQMTRS (68 aa)). The interval 717-938 (ITQPPSYEDA…SPMDLHLQQW (222 aa)) is required for interaction with and ubiquitination by STUB1. S815, S862, and S869 each carry phosphoserine; by MAPK1 and MAPK3. T896 is modified (phosphothreonine; by MAPK1 and MAPK3).

As to quaternary structure, homodimer. Interacts with MLLT7/FOXO4. Interacts with SRF, its association does not depend on specific DNA sequences for ternary complex formation. Interacts (via C-terminal) with EP300 (via the CREB-binding domain). Interacts with HDAC4 and HDAC5. Interacts with MEF2C. Interacts (via C-terminus) with STUB1/CHIP. Interacts with PURB. Ubiquitinated; by STUB1/CHIP at the C-terminus, leading to its degradation by the proteasome. Phosphorylation by GSK3B is required for STUB1/CHIP-mediated ubiquitination. In terms of processing, phosphorylation negatively regulates transcriptional activity. Phosphorylated; by GSK3B. Abundantly expressed in the heart, aorta media and bladder, weakly expressed in the stomach, intestine and lung.

The protein resides in the nucleus. Functionally, smooth muscle cells (SM) and cardiac muscle cells-specific transcriptional factor which uses the canonical single or multiple CArG boxes DNA sequence. Acts as a cofactor of serum response factor (SRF) with the potential to modulate SRF-target genes. Plays a crucial role in cardiogenesis, urinary bladder development, and differentiation of the smooth muscle cell lineage (myogenesis). Positively regulates the transcription of genes involved in vascular smooth muscle contraction. The polypeptide is Myocardin (Myocd) (Rattus norvegicus (Rat)).